The sequence spans 399 residues: Glutathione-independent formaldehyde dehydrogenase (399 aa).

C47 lines the Zn(2+) pocket. 3 residues coordinate NAD(+): G48, S49, and H52. The Zn(2+) site is built by H68, C98, C101, C104, C112, and D170. NAD(+)-binding residues include V198, D218, R223, V263, R268, H270, P300, L302, G337, and T339.

Belongs to the zinc-containing alcohol dehydrogenase family. Homotetramer. It depends on Zn(2+) as a cofactor.

The enzyme catalyses formaldehyde + NAD(+) + H2O = formate + NADH + 2 H(+). It carries out the reaction acetaldehyde + NAD(+) + H2O = acetate + NADH + 2 H(+). The catalysed reaction is 2 formaldehyde + H2O = methanol + formate + H(+). With respect to regulation, inactivated by bipyridine and p-chloromercuribenzoate. Its function is as follows. Dehydrogenase that catalyzes the NAD(+)-dependent oxidation of formaldehyde and acetaldehyde, and, to a lesser extent, long-chain alcohols, but is inactive against propionaldehyde, butyraldehyde, methanol and ethanol. Can also catalyze the dismutation of a wide range of aldehydes such as formaldehyde. The protein is Glutathione-independent formaldehyde dehydrogenase of Pseudomonas putida (Arthrobacter siderocapsulatus).